The following is a 154-amino-acid chain: MLRLLLLPLFLFTLSMCMGQTFQYSRGWTNGKRSFNAASPLLTTGHLHRGSELGLSDLYDLQEWTSDRRLERCLSQLQRSLIARNCVPGSDFNANRVDPDPESSAHPRLGNINNENVLYSSANVPTRHRQSNELLEELSAAGGASAEPNVFGKH.

The signal sequence occupies residues 1-19 (MLRLLLLPLFLFTLSMCMG). Q20 carries the post-translational modification Pyrrolidone carboxylic acid. N30 is subject to Asparagine amide. Residues 70-154 (LERCLSQLQR…SAEPNVFGKH (85 aa)) constitute a propeptide that is removed on maturation.

Belongs to the corazonin family. As to expression, expression is restricted to 24 neurons in the larval CNS (8 in the brain and 16 in the ventral nerve cord) and 12-16 neurons in the pars lateralis of the adult brain.

The protein resides in the secreted. In terms of biological role, cardioactive peptide. Corazonin is probably involved in the physiological regulation of the heart beat. Clock (Clk) and cycle (cyc) proteins negatively regulate Crz transcription in a cell-specific manner. The sequence is that of Pro-corazonin (Crz) from Drosophila erecta (Fruit fly).